Here is a 125-residue protein sequence, read N- to C-terminus: Large ribosomal subunit protein bL19 (125 aa).

It belongs to the bacterial ribosomal protein bL19 family.

In terms of biological role, this protein is located at the 30S-50S ribosomal subunit interface and may play a role in the structure and function of the aminoacyl-tRNA binding site. This Wolbachia pipientis wMel protein is Large ribosomal subunit protein bL19.